The chain runs to 282 residues: Bifunctional protein FolD (282 aa).

NADP(+)-binding positions include 165–167 (GRS), S190, and T231.

It belongs to the tetrahydrofolate dehydrogenase/cyclohydrolase family. In terms of assembly, homodimer.

It carries out the reaction (6R)-5,10-methylene-5,6,7,8-tetrahydrofolate + NADP(+) = (6R)-5,10-methenyltetrahydrofolate + NADPH. The catalysed reaction is (6R)-5,10-methenyltetrahydrofolate + H2O = (6R)-10-formyltetrahydrofolate + H(+). It functions in the pathway one-carbon metabolism; tetrahydrofolate interconversion. In terms of biological role, catalyzes the oxidation of 5,10-methylenetetrahydrofolate to 5,10-methenyltetrahydrofolate and then the hydrolysis of 5,10-methenyltetrahydrofolate to 10-formyltetrahydrofolate. This Clostridium botulinum (strain Alaska E43 / Type E3) protein is Bifunctional protein FolD.